We begin with the raw amino-acid sequence, 280 residues long: P32 adhesin (280 aa).

Helical transmembrane passes span 13–37 (FIVL…ALVV) and 68–92 (WFIP…AIGL). A compositionally biased stretch (polar residues) spans 114–128 (EQLQRISDQQEQQTV). Disordered stretches follow at residues 114–149 (EQLQ…QPLQ) and 163–280 (FNPN…GLKP). Composition is skewed to low complexity over residues 132 to 149 (PQQS…QPLQ) and 168 to 188 (QQRP…NFNP). 13 tandem repeats follow at residues 163–168 (FNPNMQ), 170–174 (RPGFN), 186–190 (FNPRM), 191–195 (NPNMQ), 196–200 (RPGFN), 199–204 (FNPNMQ), 206–210 (RPGFN), 222–226 (FNPRM), 227–231 (NPNMQ), 232–236 (RPGFN), 249–254 (FNPNMQ), 256–260 (RPGFN), and 259–264 (FNPNMQ). The 6 X 5 AA repeats of [FM]-N-P-N-M-Q stretch occupies residues 163 to 264 (FNPNMQQRPG…QRPGFNPNMQ (102 aa)). The tract at residues 170-260 (RPGFNQPNQQ…PNMQQRPGFN (91 aa)) is 5 X 5 AA repeats of R-P-G-F-N. The segment at 186–226 (FNPRMNPNMQRPGFNPNMQQRPGFNQPNQQFQPHNNFNPRM) is 2 X 5 AA repeats of F-N-P-R-M. The span at 204-224 (QQRPGFNQPNQQFQPHNNFNP) shows a compositional bias: low complexity. Residues 235–257 (FNQPHPNQFAQPNNFNPNMQQRP) show a composition bias toward low complexity. Residues 261-271 (PNMQQRPNPSQ) are compositionally biased toward polar residues.

It is found in the cell projection. It localises to the attachment organelle membrane. Its function is as follows. Adhesin necessary for successful cytadherence and virulence. In Mycoplasma genitalium (strain ATCC 33530 / DSM 19775 / NCTC 10195 / G37) (Mycoplasmoides genitalium), this protein is P32 adhesin.